The sequence spans 397 residues: Homocitrate synthase AksA (397 aa).

The region spanning 19 to 270 (VIVYDTTLRD…DPGFNTEVLA (252 aa)) is the Pyruvate carboxyltransferase domain.

Belongs to the alpha-IPM synthase/homocitrate synthase family.

It catalyses the reaction acetyl-CoA + 2-oxoglutarate + H2O = (2R)-homocitrate + CoA + H(+). The enzyme catalyses 2-oxoadipate + acetyl-CoA + H2O = (R)-dihomocitrate + CoA + H(+). It carries out the reaction 2-oxoheptanedioate + acetyl-CoA + H2O = (R)-trihomocitrate + CoA + H(+). Its pathway is organic acid metabolism; 2-oxosuberate biosynthesis. Catalyzes the condensation of alpha-ketoglutarate and acetyl-CoA to form (R)-homocitrate. Can also catalyze the condensation of alpha-ketoadipate with acetyl-CoA to form (R)-homo(2)citrate, and the condensation of alpha-ketopimelate with acetyl-CoA to form (R)-homo(3)citrate. These reactions are part of the biosynthesis pathway of coenzyme B and biotin. This Methanopyrus kandleri (strain AV19 / DSM 6324 / JCM 9639 / NBRC 100938) protein is Homocitrate synthase AksA (aksA).